Here is a 341-residue protein sequence, read N- to C-terminus: Protein-glutamate methylesterase/protein-glutamine glutaminase 1 (341 aa).

Residues 2–119 (KVGIVNDSAL…SDAKLTAGPL (118 aa)) form the Response regulatory domain. 4-aspartylphosphate is present on D53. One can recognise a CheB-type methylesterase domain in the interval 146–331 (TLAASRLVAI…LTAIAPRLVQ (186 aa)). Catalysis depends on residues S158, H185, and D278.

Belongs to the CheB family. Phosphorylated by CheA. Phosphorylation of the N-terminal regulatory domain activates the methylesterase activity.

Its subcellular location is the cytoplasm. It carries out the reaction [protein]-L-glutamate 5-O-methyl ester + H2O = L-glutamyl-[protein] + methanol + H(+). The enzyme catalyses L-glutaminyl-[protein] + H2O = L-glutamyl-[protein] + NH4(+). Involved in chemotaxis. Part of a chemotaxis signal transduction system that modulates chemotaxis in response to various stimuli. Catalyzes the demethylation of specific methylglutamate residues introduced into the chemoreceptors (methyl-accepting chemotaxis proteins or MCP) by CheR. Also mediates the irreversible deamidation of specific glutamine residues to glutamic acid. The chain is Protein-glutamate methylesterase/protein-glutamine glutaminase 1 from Cupriavidus pinatubonensis (strain JMP 134 / LMG 1197) (Cupriavidus necator (strain JMP 134)).